The following is an 816-amino-acid chain: Leucine--tRNA ligase (816 aa).

The 'HIGH' region signature appears at 42–52; it reads PYPSGSLHMGH. The 'KMSKS' region motif lies at 574–578; sequence KMSKS. Lys-577 lines the ATP pocket.

Belongs to the class-I aminoacyl-tRNA synthetase family.

The protein resides in the cytoplasm. It carries out the reaction tRNA(Leu) + L-leucine + ATP = L-leucyl-tRNA(Leu) + AMP + diphosphate. The polypeptide is Leucine--tRNA ligase (Ruthia magnifica subsp. Calyptogena magnifica).